The primary structure comprises 605 residues: Beta-hexosaminidase ARB_07893 (605 aa).

An N-terminal signal peptide occupies residues Met-1–Ala-18. The N-linked (GlcNAc...) asparagine glycan is linked to Asn-30. Glu-293 serves as the catalytic Nucleophile. Asn-342 carries N-linked (GlcNAc...) asparagine glycosylation. Glu-374 functions as the Proton donor in the catalytic mechanism. An N-linked (GlcNAc...) asparagine glycan is attached at Asn-449.

This sequence belongs to the glycosyl hydrolase 20 family.

It is found in the secreted. It catalyses the reaction Hydrolysis of terminal non-reducing N-acetyl-D-hexosamine residues in N-acetyl-beta-D-hexosaminides.. Its function is as follows. Beta-hexosaminidase that shows a broad substrate specificity. In Arthroderma benhamiae (strain ATCC MYA-4681 / CBS 112371) (Trichophyton mentagrophytes), this protein is Beta-hexosaminidase ARB_07893.